Consider the following 576-residue polypeptide: Laccase-1 (576 aa).

An N-terminal signal peptide occupies residues 1-19; sequence MARTTFLVSVSLFVSAVLA. Plastocyanin-like domains lie at 21-145 and 157-304; these read TVEY…LVIY and VDDE…LVYE. N-linked (GlcNAc...) asparagine glycosylation is present at N41. The Cu cation site is built by H82, H84, H127, and H129. Cysteines 103 and 562 form a disulfide. 4 N-linked (GlcNAc...) asparagine glycosylation sites follow: N182, N228, N294, and N368. Residues 376 to 576 enclose the Plastocyanin-like 3 domain; sequence DESKLVPLEY…NWLKSNPGQL (201 aa). Cu cation-binding residues include H471, H474, H476, H523, C524, H525, and H529.

This sequence belongs to the multicopper oxidase family. Homodimer. It depends on Cu cation as a cofactor. As to expression, in mycelia, at a lower level than LCC4.

The protein localises to the secreted. The enzyme catalyses 4 hydroquinone + O2 = 4 benzosemiquinone + 2 H2O. In terms of biological role, lignin degradation and detoxification of lignin-derived products. This chain is Laccase-1 (LCC1), found in Thanatephorus cucumeris (Black scurf of potato).